The primary structure comprises 214 residues: Holliday junction branch migration complex subunit RuvA (214 aa).

The domain I stretch occupies residues Met-1–Pro-63. The interval Gly-64–Arg-139 is domain II. The interval Arg-139–Ser-143 is flexible linker. The segment at Ala-144–Arg-214 is domain III.

The protein belongs to the RuvA family. Homotetramer. Forms an RuvA(8)-RuvB(12)-Holliday junction (HJ) complex. HJ DNA is sandwiched between 2 RuvA tetramers; dsDNA enters through RuvA and exits via RuvB. An RuvB hexamer assembles on each DNA strand where it exits the tetramer. Each RuvB hexamer is contacted by two RuvA subunits (via domain III) on 2 adjacent RuvB subunits; this complex drives branch migration. In the full resolvosome a probable DNA-RuvA(4)-RuvB(12)-RuvC(2) complex forms which resolves the HJ.

It is found in the cytoplasm. Functionally, the RuvA-RuvB-RuvC complex processes Holliday junction (HJ) DNA during genetic recombination and DNA repair, while the RuvA-RuvB complex plays an important role in the rescue of blocked DNA replication forks via replication fork reversal (RFR). RuvA specifically binds to HJ cruciform DNA, conferring on it an open structure. The RuvB hexamer acts as an ATP-dependent pump, pulling dsDNA into and through the RuvAB complex. HJ branch migration allows RuvC to scan DNA until it finds its consensus sequence, where it cleaves and resolves the cruciform DNA. In Clavibacter sepedonicus (Clavibacter michiganensis subsp. sepedonicus), this protein is Holliday junction branch migration complex subunit RuvA.